The sequence spans 158 residues: Cyclic pyranopterin monophosphate synthase (158 aa).

Residues 76-78 (LCH) and 114-115 (ME) contribute to the substrate site. Asp-129 is an active-site residue.

This sequence belongs to the MoaC family. Homohexamer; trimer of dimers.

It catalyses the reaction (8S)-3',8-cyclo-7,8-dihydroguanosine 5'-triphosphate = cyclic pyranopterin phosphate + diphosphate. Its pathway is cofactor biosynthesis; molybdopterin biosynthesis. Functionally, catalyzes the conversion of (8S)-3',8-cyclo-7,8-dihydroguanosine 5'-triphosphate to cyclic pyranopterin monophosphate (cPMP). This is Cyclic pyranopterin monophosphate synthase from Shewanella loihica (strain ATCC BAA-1088 / PV-4).